Reading from the N-terminus, the 55-residue chain is Large ribosomal subunit protein bL33 (55 aa).

It belongs to the bacterial ribosomal protein bL33 family.

The chain is Large ribosomal subunit protein bL33 from Azoarcus sp. (strain BH72).